We begin with the raw amino-acid sequence, 619 residues long: Genetic interactor of prohibitins 3, mitochondrial (619 aa).

A mitochondrion-targeting transit peptide spans 1–55 (MLKAQIQTGLQLLQRAAVSHMRPSSCTSMLMRMRVHLAPRALQSQRSLSSSEFSP). Residues 162–372 (VAAVSDVMHS…IYDVPGFSSA (211 aa)) enclose the CP-type G domain.

Belongs to the TRAFAC class YlqF/YawG GTPase family. GEP3 subfamily.

It localises to the mitochondrion. In terms of biological role, may be involved in the mitochondrial lipid metabolism. The chain is Genetic interactor of prohibitins 3, mitochondrial (GEP3) from Clavispora lusitaniae (strain ATCC 42720) (Yeast).